The following is a 637-amino-acid chain: Limonene synthase, chloroplastic (637 aa).

The N-terminal 56 residues, 1-56 (MALLSIVSLQVPKSCGLKSLISSSNVQKALCISTAVPTLRMRRRQKALVINMKLTT), are a transit peptide targeting the chloroplast. Mg(2+) contacts are provided by aspartate 388, aspartate 392, and aspartate 540. The DDXXD motif motif lies at 388 to 392 (DDIYD).

The protein belongs to the terpene synthase family. Tpsd subfamily. The cofactor is Mg(2+). Mn(2+) serves as cofactor. Requires K(+) as cofactor.

Its subcellular location is the plastid. The protein localises to the chloroplast. It carries out the reaction (2E)-geranyl diphosphate = (4S)-limonene + diphosphate. It functions in the pathway terpene metabolism; oleoresin biosynthesis. Involved in defensive oleoresin formation in conifers in response to insect attack or other injury. Involved in monoterpene (C10) olefins biosynthesis. This Abies grandis (Grand fir) protein is Limonene synthase, chloroplastic (ag10).